Consider the following 103-residue polypeptide: Small ribosomal subunit protein uS10 (103 aa).

The protein belongs to the universal ribosomal protein uS10 family. In terms of assembly, part of the 30S ribosomal subunit.

Involved in the binding of tRNA to the ribosomes. In Marinomonas sp. (strain MWYL1), this protein is Small ribosomal subunit protein uS10.